We begin with the raw amino-acid sequence, 92 residues long: Large ribosomal subunit protein bL27 (92 aa).

Positions 1–22 (MAHTKAGGSTRNGRDSRGQRLG) are disordered.

It belongs to the bacterial ribosomal protein bL27 family.

The protein is Large ribosomal subunit protein bL27 of Mycoplasmopsis agalactiae (strain NCTC 10123 / CIP 59.7 / PG2) (Mycoplasma agalactiae).